A 154-amino-acid polypeptide reads, in one-letter code: Mitochondrial fission 1 protein (154 aa).

Residues 1 to 124 are Cytoplasmic-facing; sequence MEDLLNEVVP…KEIDKEVAKG (124 aa). The helical transmembrane segment at 125 to 145 threads the bilayer; the sequence is MVVAGGAALVLGGILGLGIAM. Topologically, residues 146-154 are mitochondrial intermembrane; the sequence is ARNKQKREK.

The protein belongs to the FIS1 family.

It is found in the mitochondrion outer membrane. Involved in the fragmentation of the mitochondrial network and its perinuclear clustering. Functions downstream of Pink1 and upstream of Drp1 to regulate mitochondrial fission. The chain is Mitochondrial fission 1 protein from Drosophila melanogaster (Fruit fly).